The sequence spans 172 residues: Large ribosomal subunit protein uL10 (172 aa).

This sequence belongs to the universal ribosomal protein uL10 family. Part of the ribosomal stalk of the 50S ribosomal subunit. The N-terminus interacts with L11 and the large rRNA to form the base of the stalk. The C-terminus forms an elongated spine to which L12 dimers bind in a sequential fashion forming a multimeric L10(L12)X complex.

Functionally, forms part of the ribosomal stalk, playing a central role in the interaction of the ribosome with GTP-bound translation factors. This Syntrophotalea carbinolica (strain DSM 2380 / NBRC 103641 / GraBd1) (Pelobacter carbinolicus) protein is Large ribosomal subunit protein uL10.